The chain runs to 206 residues: Glutathione S-transferase 1 (206 aa).

In terms of domain architecture, GST N-terminal spans 2 to 79; the sequence is PQYKLTYFDI…YLGRQFGLAG (78 aa). Glutathione is bound by residues tyrosine 8, tryptophan 39, lysine 43, 49 to 51, and 63 to 64; these read GQL and QS. Positions 81–206 constitute a GST C-terminal domain; that stretch reads TPMEEAQVDS…WIAERPKTPY (126 aa).

It belongs to the GST superfamily. Sigma family.

It catalyses the reaction RX + glutathione = an S-substituted glutathione + a halide anion + H(+). Conjugation of reduced glutathione to a wide number of exogenous and endogenous hydrophobic electrophiles. Can also function as a GSH peroxidase. The sequence is that of Glutathione S-transferase 1 (GST1) from Ascaris suum (Pig roundworm).